A 326-amino-acid chain; its full sequence is Protoheme IX farnesyltransferase (326 aa).

Transmembrane regions (helical) follow at residues 35–55 (LIPL…GWPL), 60–80 (LICT…LNCL), 106–126 (TAFI…VSGV), 129–149 (LAAG…TALL), 157–177 (IVVG…AATG), 185–205 (WLFA…ALLL), 238–258 (VLLS…YGLM), and 289–309 (WSIL…SALA).

It belongs to the UbiA prenyltransferase family. Protoheme IX farnesyltransferase subfamily.

The protein localises to the cell inner membrane. The catalysed reaction is heme b + (2E,6E)-farnesyl diphosphate + H2O = Fe(II)-heme o + diphosphate. Its pathway is porphyrin-containing compound metabolism; heme O biosynthesis; heme O from protoheme: step 1/1. Functionally, converts heme B (protoheme IX) to heme O by substitution of the vinyl group on carbon 2 of heme B porphyrin ring with a hydroxyethyl farnesyl side group. In Synechococcus sp. (strain CC9902), this protein is Protoheme IX farnesyltransferase.